The chain runs to 365 residues: Succinyl-diaminopimelate desuccinylase (365 aa).

His-65 is a binding site for Zn(2+). The active site involves Asp-67. Asp-96 provides a ligand contact to Zn(2+). Glu-126 acts as the Proton acceptor in catalysis. Zn(2+)-binding residues include Glu-127, Glu-155, and His-340.

This sequence belongs to the peptidase M20A family. DapE subfamily. Homodimer. Zn(2+) serves as cofactor. Co(2+) is required as a cofactor.

It catalyses the reaction N-succinyl-(2S,6S)-2,6-diaminopimelate + H2O = (2S,6S)-2,6-diaminopimelate + succinate. It participates in amino-acid biosynthesis; L-lysine biosynthesis via DAP pathway; LL-2,6-diaminopimelate from (S)-tetrahydrodipicolinate (succinylase route): step 3/3. Its function is as follows. Catalyzes the hydrolysis of N-succinyl-L,L-diaminopimelic acid (SDAP), forming succinate and LL-2,6-diaminopimelate (DAP), an intermediate involved in the bacterial biosynthesis of lysine and meso-diaminopimelic acid, an essential component of bacterial cell walls. In Campylobacter jejuni subsp. jejuni serotype O:6 (strain 81116 / NCTC 11828), this protein is Succinyl-diaminopimelate desuccinylase.